Reading from the N-terminus, the 842-residue chain is Glycogen phosphorylase, muscle form (842 aa).

N-acetylserine is present on Ser2. Ser15 is modified (phosphoserine; by PHK; in form phosphorylase A). Asp43 and Tyr76 together coordinate AMP. 2 positions are modified to phosphotyrosine: Tyr204 and Tyr227. Residue 310–319 (RRFKSSKFGC) coordinates AMP. Phosphoserine is present on Ser430. Residue Tyr473 is modified to Phosphotyrosine. N6-(pyridoxal phosphate)lysine is present on Lys681. 2 positions are modified to phosphoserine: Ser747 and Ser748.

It belongs to the glycogen phosphorylase family. In terms of assembly, homodimer. Homotetramer; to form the enzymatically active phosphorylase A. Requires pyridoxal 5'-phosphate as cofactor. Phosphorylation of Ser-15 converts phosphorylase B (unphosphorylated) to phosphorylase A.

The enzyme catalyses [(1-&gt;4)-alpha-D-glucosyl](n) + phosphate = [(1-&gt;4)-alpha-D-glucosyl](n-1) + alpha-D-glucose 1-phosphate. With respect to regulation, allosterically regulated through the non-covalent binding of metabolites, being activated by AMP and inhibited by ATP, ADP, and glucose-6-phosphate. The activity is also controlled by post-translational modifications including phosphorylation. In terms of biological role, allosteric enzyme that catalyzes the rate-limiting step in glycogen catabolism, the phosphorolytic cleavage of glycogen to produce glucose-1-phosphate, and plays a central role in maintaining cellular and organismal glucose homeostasis. In Ovis aries (Sheep), this protein is Glycogen phosphorylase, muscle form.